Reading from the N-terminus, the 368-residue chain is H-2 class I histocompatibility antigen, K-W28 alpha chain (368 aa).

An N-terminal signal peptide occupies residues 1–21; sequence MAPCMLLLLLAAALAPTQTRA. An alpha-1 region spans residues 22–111; sequence GPHSLRYFHT…LLRYYNQSAG (90 aa). Over 22 to 305 the chain is Extracellular; it reads GPHSLRYFHT…EPPPSAVSNT (284 aa). The N-linked (GlcNAc...) asparagine glycan is linked to Asn-107. An alpha-2 region spans residues 112-203; that stretch reads GSHTIQRMYG…KNGNATLLRT (92 aa). Cys-122 and Cys-185 are joined by a disulfide. An N-linked (GlcNAc...) asparagine glycan is attached at Asn-197. The interval 204–295 is alpha-3; sequence DSPKAHVTHH…GLPKPLTLRW (92 aa). Positions 206 to 292 constitute an Ig-like C1-type domain; it reads PKAHVTHHSR…YHQGLPKPLT (87 aa). The cysteines at positions 224 and 280 are disulfide-linked. A connecting peptide region spans residues 296-305; the sequence is EPPPSAVSNT. Residues 306-329 form a helical membrane-spanning segment; that stretch reads VIIAVLVVLGAAIVTGAVVAFVMM. Residues 330-368 are Cytoplasmic-facing; the sequence is RRRNTGGKGGDYALAPGSQTSDLSLPDCKVMVHDPHSLA. 2 positions are modified to phosphoserine: Ser-350 and Ser-353.

This sequence belongs to the MHC class I family. In terms of assembly, heterodimer of an alpha chain and a beta chain (beta-2-microglobulin).

Its subcellular location is the membrane. Involved in the presentation of foreign antigens to the immune system. The polypeptide is H-2 class I histocompatibility antigen, K-W28 alpha chain (H2-K1) (Mus musculus (Mouse)).